Consider the following 233-residue polypeptide: Pilin-like protein PilA3 (233 aa).

A propeptide spans 1-4 (leader sequence); that stretch reads MKRG. N-methylphenylalanine is present on Phe-5. Residues 5–25 traverse the membrane as a helical segment; sequence FTLVEVLVAMAILVVVLAVGV. The tract at residues 121–143 is disordered; sequence LRRSDVNATPSSGSDCTTPPPNS. Positions 126 to 137 are enriched in polar residues; the sequence is VNATPSSGSDCT.

The protein localises to the cell inner membrane. Its subcellular location is the cell outer membrane. The protein resides in the periplasm. Plays an essential role in natural DNA transformation but is not required for pilus biogenesis. This is Pilin-like protein PilA3 (pilA3) from Thermus thermophilus (strain ATCC BAA-163 / DSM 7039 / HB27).